A 147-amino-acid polypeptide reads, in one-letter code: Cytochrome c' (147 aa).

Residues 1 to 21 (MKRMMIVAALAALTTTTVAQA) form the signal peptide. Heme c-binding residues include R31, T87, E88, C137, C140, and H141.

As to quaternary structure, homodimer. In terms of processing, binds 1 heme c group covalently per subunit.

In terms of biological role, cytochrome c' is the most widely occurring bacterial c-type cytochrome. Cytochromes c' are high-spin proteins and the heme has no sixth ligand. Their exact function is not known. The protein is Cytochrome c' of Rhodospirillum rubrum (strain ATCC 11170 / ATH 1.1.1 / DSM 467 / LMG 4362 / NCIMB 8255 / S1).